A 160-amino-acid polypeptide reads, in one-letter code: Transcriptional repressor NrdR (160 aa).

The segment at 3–34 is a zinc-finger region; the sequence is CPRCHHNNSRVIDSRQADDGRAIRRRRECENC. The 91-residue stretch at 49-139 folds into the ATP-cone domain; it reads LLVIKKNGDR…VYRQFKDMSV (91 aa).

The protein belongs to the NrdR family. The cofactor is Zn(2+).

In terms of biological role, negatively regulates transcription of bacterial ribonucleotide reductase nrd genes and operons by binding to NrdR-boxes. The sequence is that of Transcriptional repressor NrdR from Enterococcus faecalis (strain ATCC 700802 / V583).